Here is a 150-residue protein sequence, read N- to C-terminus: Glycophorin-A (150 aa).

The N-terminal stretch at 1–19 is a signal peptide; the sequence is MYGKIIFVLLLSEIVSISA. At 20 to 91 the chain is on the extracellular side; that stretch reads LSTTEVAMHT…QLAHHFSEPE (72 aa). Ser-21 carries an O-linked (GalNAc...) serine glycan. O-linked (GalNAc...) threonine glycosylation is found at Thr-22, Thr-23, and Thr-29. A glycan (O-linked (GalNAc...) serine) is linked at Ser-30. An O-linked (GalNAc...) threonine glycan is attached at Thr-31. Residue Ser-32 is glycosylated (O-linked (GalNAc...) serine). The O-linked (GalNAc...) threonine glycan is linked to Thr-36. Residues Ser-38 and Ser-41 are each glycosylated (O-linked (GalNAc...) serine). The O-linked (GalNAc...) threonine glycan is linked to Thr-44. A glycan (N-linked (GlcNAc...) asparagine) is linked at Asn-45. O-linked (GalNAc...) threonine glycosylation is found at Thr-52 and Thr-56. Residues Ser-63 and Ser-66 are each glycosylated (O-linked (GalNAc...) serine). O-linked (GalNAc...) threonine glycosylation is present at Thr-69. The helical transmembrane segment at 92-114 threads the bilayer; that stretch reads ITLIIFGVMAGVIGTILLISYGI. Residues 115-150 are Cytoplasmic-facing; the sequence is RRLIKKSPSDVKPLPSPDTDVPLSSVEIENPETSDQ. A disordered region spans residues 121-150; the sequence is SPSDVKPLPSPDTDVPLSSVEIENPETSDQ. The residue at position 133 (Thr-133) is a Phosphothreonine. Phosphoserine occurs at positions 138 and 148.

This sequence belongs to the glycophorin A family. Homodimer. Component of the ankyrin-1 complex in the erythrocyte, composed of ANK1, RHCE, RHAG, SLC4A1, EPB42, GYPA, GYPB and AQP1. Interacts with SLC4A1; a GYPA monomer is bound at each end of the SLC4A1 dimer forming a heterotetramer. In terms of assembly, (Microbial infection) Interacts with Streptococcus gordonii hsa protein. As to quaternary structure, (Microbial infection) Interacts (in a sialic acid-independent manner) with P.falciparum MSP1 subunit p83. The major O-linked glycan are NeuAc-alpha-(2-3)-Gal-beta-(1-3)-[NeuAc-alpha-(2-6)]-GalNAcOH (about 78 %) and NeuAc-alpha-(2-3)-Gal-beta-(1-3)-GalNAcOH (17 %). Minor O-glycans (5 %) include NeuAc-alpha-(2-3)-Gal-beta-(1-3)-[NeuAc-alpha-(2-6)]-GalNAcOH NeuAc-alpha-(2-8)-NeuAc-alpha-(2-3)-Gal-beta-(1-3)-GalNAcOH. About 1% of all O-linked glycans carry blood group A, B and H determinants. They derive from a type-2 precursor core structure, Gal-beta-(1,3)-GlcNAc-beta-1-R, and the antigens are synthesized by addition of fucose (H antigen-specific) and then N-acetylgalactosamine (A antigen-specific) or galactose (B antigen-specific). Specifically O-linked-glycans are NeuAc-alpha-(2-3)-Gal-beta-(1-3)-GalNAcOH-(6-1)-GlcNAc-beta-(4-1)-[Fuc-alpha-(1-2)]-Gal-beta-(3-1)-GalNAc-alpha (about 1%, B antigen-specific) and NeuAc-alpha-(2-3)-Gal-beta-(1-3)-GalNAcOH-(6-1)-GlcNAc-beta-(4-1)-[Fuc-alpha-(1-2)]-Gal-beta (1 %, O antigen-, A antigen- and B antigen-specific).

Its subcellular location is the cell membrane. Functionally, component of the ankyrin-1 complex, a multiprotein complex involved in the stability and shape of the erythrocyte membrane. Glycophorin A is the major intrinsic membrane protein of the erythrocyte. The N-terminal glycosylated segment, which lies outside the erythrocyte membrane, has MN blood group receptors. Appears to be important for the function of SLC4A1 and is required for high activity of SLC4A1. May be involved in translocation of SLC4A1 to the plasma membrane. (Microbial infection) Appears to be a receptor for Hepatitis A virus (HAV). Its function is as follows. (Microbial infection) Receptor for P.falciparum erythrocyte-binding antigen 175 (EBA-175); binding of EBA-175 is dependent on sialic acid residues of the O-linked glycans. The sequence is that of Glycophorin-A from Homo sapiens (Human).